The sequence spans 96 residues: Co-chaperonin GroES (96 aa).

This sequence belongs to the GroES chaperonin family. Heptamer of 7 subunits arranged in a ring. Interacts with the chaperonin GroEL.

The protein resides in the cytoplasm. Its function is as follows. Together with the chaperonin GroEL, plays an essential role in assisting protein folding. The GroEL-GroES system forms a nano-cage that allows encapsulation of the non-native substrate proteins and provides a physical environment optimized to promote and accelerate protein folding. GroES binds to the apical surface of the GroEL ring, thereby capping the opening of the GroEL channel. The polypeptide is Co-chaperonin GroES (Halorhodospira halophila (strain DSM 244 / SL1) (Ectothiorhodospira halophila (strain DSM 244 / SL1))).